The primary structure comprises 426 residues: Serine--tRNA ligase (426 aa).

227-229 contacts L-serine; sequence TSE. ATP-binding positions include 258 to 260 and V274; that span reads RKE. An L-serine-binding site is contributed by E281. 345–348 contributes to the ATP binding site; that stretch reads ELTS. T380 contributes to the L-serine binding site.

Belongs to the class-II aminoacyl-tRNA synthetase family. Type-1 seryl-tRNA synthetase subfamily. In terms of assembly, homodimer. The tRNA molecule binds across the dimer.

Its subcellular location is the cytoplasm. It catalyses the reaction tRNA(Ser) + L-serine + ATP = L-seryl-tRNA(Ser) + AMP + diphosphate + H(+). The enzyme catalyses tRNA(Sec) + L-serine + ATP = L-seryl-tRNA(Sec) + AMP + diphosphate + H(+). It participates in aminoacyl-tRNA biosynthesis; selenocysteinyl-tRNA(Sec) biosynthesis; L-seryl-tRNA(Sec) from L-serine and tRNA(Sec): step 1/1. Its function is as follows. Catalyzes the attachment of serine to tRNA(Ser). Is also able to aminoacylate tRNA(Sec) with serine, to form the misacylated tRNA L-seryl-tRNA(Sec), which will be further converted into selenocysteinyl-tRNA(Sec). This Clavibacter michiganensis subsp. michiganensis (strain NCPPB 382) protein is Serine--tRNA ligase.